Consider the following 251-residue polypeptide: B3 domain-containing protein REM7 (251 aa).

2 consecutive DNA-binding regions (TF-B3) follow at residues 11 to 103 and 170 to 251; these read NSHF…LGPS and CFVA…SRLN.

The protein localises to the nucleus. In Arabidopsis thaliana (Mouse-ear cress), this protein is B3 domain-containing protein REM7 (REM7).